The following is a 484-amino-acid chain: tRNA-2-methylthio-N(6)-dimethylallyladenosine synthase (484 aa).

The MTTase N-terminal domain occupies 36–153 (GKLYIKTHGC…LPELIRARRE (118 aa)). 6 residues coordinate [4Fe-4S] cluster: cysteine 45, cysteine 82, cysteine 116, cysteine 190, cysteine 194, and cysteine 197. Residues 176-415 (RAEGPSAFVS…HISAHAASIS (240 aa)) form the Radical SAM core domain. Residues 416-479 (QSMVGSVQRV…SNSLRGRIQL (64 aa)) form the TRAM domain. The interval 428–450 (EGPSRRDPNELTGKSENMRPVNF) is disordered.

Belongs to the methylthiotransferase family. MiaB subfamily. Monomer. Requires [4Fe-4S] cluster as cofactor.

It is found in the cytoplasm. It carries out the reaction N(6)-dimethylallyladenosine(37) in tRNA + (sulfur carrier)-SH + AH2 + 2 S-adenosyl-L-methionine = 2-methylsulfanyl-N(6)-dimethylallyladenosine(37) in tRNA + (sulfur carrier)-H + 5'-deoxyadenosine + L-methionine + A + S-adenosyl-L-homocysteine + 2 H(+). Its function is as follows. Catalyzes the methylthiolation of N6-(dimethylallyl)adenosine (i(6)A), leading to the formation of 2-methylthio-N6-(dimethylallyl)adenosine (ms(2)i(6)A) at position 37 in tRNAs that read codons beginning with uridine. This is tRNA-2-methylthio-N(6)-dimethylallyladenosine synthase from Xanthomonas oryzae pv. oryzae (strain KACC10331 / KXO85).